A 949-amino-acid chain; its full sequence is Piwi-like protein 2 (949 aa).

Residues 1-125 (MDPTRPPFRG…SLSTRVQQAS (125 aa)) form a disordered region. Positions 115–125 (PSLSTRVQQAS) are enriched in polar residues. The region spanning 366–478 (SVLDIMNILY…LLPELAFMTG (113 aa)) is the PAZ domain. Residues 644-935 (LLVCLISGTR…LAFLSGQFLH (292 aa)) enclose the Piwi domain. Residues Asp-721, Glu-759, Asp-791, and His-924 contribute to the active site.

The protein belongs to the argonaute family. Piwi subfamily. In terms of assembly, component of the PET complex. Requires Mg(2+) as cofactor. Post-translationally, methylated on arginine residues; required for the interaction with Tudor domain-containing protein and subsequent localization to the meiotic nuage, also named P granule. Expressed in oocytes, testis and liver (at protein level).

Its subcellular location is the cytoplasm. It is found in the nucleus. In terms of biological role, endoribonuclease that plays a central role during spermatogenesis by repressing transposable elements and preventing their mobilization, which is essential for the germline integrity. Plays an essential role in meiotic differentiation of spermatocytes, germ cell differentiation and in self-renewal of spermatogonial stem cells. Acts via the piRNA metabolic process, which mediates the repression of transposable elements during meiosis by forming complexes composed of piRNAs and Piwi proteins and govern the methylation and subsequent repression of transposons. During piRNA biosynthesis, plays a key role in the piRNA amplification loop, also named ping-pong amplification cycle, by acting as a 'slicer-competent' piRNA endoribonuclease that cleaves primary piRNAs, which are then loaded onto 'slicer-incompetent' piwil4. Piwil2 slicing produces a pre-miRNA intermediate, which is then processed in mature piRNAs, and as well as a 16 nucleotide by-product that is degraded. Required for piwil4/miwi2 nuclear localization and association with secondary piRNAs antisense. Represses circadian rhythms by promoting the stability and activity of core clock components BMAL1 and CLOCK. The protein is Piwi-like protein 2 (piwil2) of Xenopus tropicalis (Western clawed frog).